The following is a 649-amino-acid chain: Exoribonuclease 2 (649 aa).

Residues 190 to 517 enclose the RNB domain; sequence RKDLTDLDFI…NHRLLKSIIK (328 aa). The 83-residue stretch at 562–644 folds into the S1 motif domain; it reads NQKFNAEITD…KTRSIIAKPV (83 aa).

Belongs to the RNR ribonuclease family. RNase II subfamily.

The protein resides in the cytoplasm. The catalysed reaction is Exonucleolytic cleavage in the 3'- to 5'-direction to yield nucleoside 5'-phosphates.. In terms of biological role, involved in mRNA degradation. Hydrolyzes single-stranded polyribonucleotides processively in the 3' to 5' direction. The chain is Exoribonuclease 2 from Buchnera aphidicola subsp. Acyrthosiphon pisum (strain 5A).